A 197-amino-acid polypeptide reads, in one-letter code: Small ribosomal subunit protein uS4c (197 aa).

Positions 84 to 143 (MRLDNIIFQLGMASTIPAARQLVCHRHILVNHRVVDIPSYRCKPRDIISIRNRPTSANAL) constitute an S4 RNA-binding domain.

Belongs to the universal ribosomal protein uS4 family. As to quaternary structure, part of the 30S ribosomal subunit. Contacts protein S5. The interaction surface between S4 and S5 is involved in control of translational fidelity.

It localises to the plastid. It is found in the chloroplast. In terms of biological role, one of the primary rRNA binding proteins, it binds directly to 16S rRNA where it nucleates assembly of the body of the 30S subunit. With S5 and S12 plays an important role in translational accuracy. This chain is Small ribosomal subunit protein uS4c (rps4), found in Adiantum capillus-veneris (Maidenhair fern).